Consider the following 222-residue polypeptide: Thiopurine S-methyltransferase (222 aa).

Residues Trp-10, Leu-45, Glu-66, and Arg-123 each coordinate S-adenosyl-L-methionine.

Belongs to the class I-like SAM-binding methyltransferase superfamily. TPMT family.

It is found in the cytoplasm. The enzyme catalyses S-adenosyl-L-methionine + a thiopurine = S-adenosyl-L-homocysteine + a thiopurine S-methylether.. This is Thiopurine S-methyltransferase from Pseudomonas fluorescens (strain ATCC BAA-477 / NRRL B-23932 / Pf-5).